The sequence spans 1060 residues: Carbamoyl phosphate synthase large chain (1060 aa).

The interval M1 to E401 is carboxyphosphate synthetic domain. ATP contacts are provided by R129, R169, G175, G176, R208, I210, E215, G241, V242, H243, Q284, and E298. In terms of domain architecture, ATP-grasp 1 spans K133–V327. The Mg(2+) site is built by Q284, E298, and N300. Residues Q284, E298, and N300 each contribute to the Mn(2+) site. The interval V402–S546 is oligomerization domain. A carbamoyl phosphate synthetic domain region spans residues V547–G929. Residues D671–L861 form the ATP-grasp 2 domain. Residues R707, H746, L748, E752, G777, I778, H779, S780, Q820, and E832 each contribute to the ATP site. Mg(2+) is bound by residues Q820, E832, and N834. Q820, E832, and N834 together coordinate Mn(2+). Residues M930–S1060 form the MGS-like domain. Positions M930–S1060 are allosteric domain.

This sequence belongs to the CarB family. In terms of assembly, composed of two chains; the small (or glutamine) chain promotes the hydrolysis of glutamine to ammonia, which is used by the large (or ammonia) chain to synthesize carbamoyl phosphate. Tetramer of heterodimers (alpha,beta)4. Requires Mg(2+) as cofactor. Mn(2+) serves as cofactor.

It catalyses the reaction hydrogencarbonate + L-glutamine + 2 ATP + H2O = carbamoyl phosphate + L-glutamate + 2 ADP + phosphate + 2 H(+). It carries out the reaction hydrogencarbonate + NH4(+) + 2 ATP = carbamoyl phosphate + 2 ADP + phosphate + 2 H(+). It functions in the pathway amino-acid biosynthesis; L-arginine biosynthesis; carbamoyl phosphate from bicarbonate: step 1/1. The protein operates within pyrimidine metabolism; UMP biosynthesis via de novo pathway; (S)-dihydroorotate from bicarbonate: step 1/3. Large subunit of the glutamine-dependent carbamoyl phosphate synthetase (CPSase). CPSase catalyzes the formation of carbamoyl phosphate from the ammonia moiety of glutamine, carbonate, and phosphate donated by ATP, constituting the first step of 2 biosynthetic pathways, one leading to arginine and/or urea and the other to pyrimidine nucleotides. The large subunit (synthetase) binds the substrates ammonia (free or transferred from glutamine from the small subunit), hydrogencarbonate and ATP and carries out an ATP-coupled ligase reaction, activating hydrogencarbonate by forming carboxy phosphate which reacts with ammonia to form carbamoyl phosphate. This Lacticaseibacillus casei (strain BL23) (Lactobacillus casei) protein is Carbamoyl phosphate synthase large chain.